A 651-amino-acid polypeptide reads, in one-letter code: MGKKHKKHKSDKHLYEEYVEKPLKLVLKVGGNEVTELSTGSSGHDSSLFEDKNDHDKHKDRKRKKRKKGEKQIPGEEKGRKRRRVKEDKKKRDRDRVENEAEKDLQCHAPVRLDLPPEKPLTSSLAKQEEVEQTPLQEALNQLMRQLQRKDPSAFFSFPVTDFIAPGYSMIIKHPMDFSTMKEKIKNNDYQSIEELKDNFKLMCTNAMIYNKPETIYYKAAKKLLHSGMKILSQERIQSLKQSIDFMADLQKTRKQKDGTDTSQSGEDGGCWQREREDSGDAEAHASKSPSKENKKKDNDMLEDKFKSNNLEREQEQLDRIVKESGGKLTRRLVNSQCEFERRKPDGTTTLGLLHPVDPIVGEPGYCPVRLGMTTGRLQSGVNTLQGFKEDKRNKVTPVLYLNYGPYSSYAPHYDSTFANISKDDSDLIYSTYGEDSDLPSDFSIHEFLATCQDYPYVMADSLLDVLTKGGHSRTLQEMEMSLPEDEGHTRTLDTAKEMEITEVEPPGRLDSSTQDRLIALKAVTNFGVPVEVFDSEEAEIFQKKLDETTRLLRELQEAQNERLSTRPPPNMICLLGPSYREMHLAEQVTNNLKELAQQVTPGDIVSTYGVRKAMGISIPSPVMENNFVDLTEDTEEPKKTDVAECGPGGS.

Lys21 is covalently cross-linked (Glycyl lysine isopeptide (Lys-Gly) (interchain with G-Cter in SUMO2)). Positions 35-45 (TELSTGSSGHD) are enriched in polar residues. The tract at residues 35–132 (TELSTGSSGH…SSLAKQEEVE (98 aa)) is disordered. Residues 47–57 (SLFEDKNDHDK) are compositionally biased toward basic and acidic residues. Lys52 participates in a covalent cross-link: Glycyl lysine isopeptide (Lys-Gly) (interchain with G-Cter in SUMO2). A compositionally biased stretch (basic residues) spans 58-69 (HKDRKRKKRKKG). A Nuclear localization signal motif is present at residues 65–96 (KRKKGEKQIPGEEKGRKRRRVKEDKKKRDRDR). The segment covering 70 to 106 (EKQIPGEEKGRKRRRVKEDKKKRDRDRVENEAEKDLQ) has biased composition (basic and acidic residues). Glycyl lysine isopeptide (Lys-Gly) (interchain with G-Cter in SUMO2) cross-links involve residues Lys127, Lys186, Lys197, Lys201, Lys212, and Lys241. Residues 131 to 235 (VEQTPLQEAL…HSGMKILSQE (105 aa)) form the Bromo domain. Residues 253–312 (TRKQKDGTDTSQSGEDGGCWQREREDSGDAEAHASKSPSKENKKKDNDMLEDKFKSNNLE) form a disordered region. The span at 273-312 (QREREDSGDAEAHASKSPSKENKKKDNDMLEDKFKSNNLE) shows a compositional bias: basic and acidic residues. Phosphoserine is present on residues Ser279 and Ser289. Glycyl lysine isopeptide (Lys-Gly) (interchain with G-Cter in SUMO2) cross-links involve residues Lys305 and Lys307. An N6-acetyllysine modification is found at Lys328. Residue Lys344 forms a Glycyl lysine isopeptide (Lys-Gly) (interchain with G-Cter in SUMO2) linkage. Ser380 carries the post-translational modification Phosphoserine. Residue Lys389 forms a Glycyl lysine isopeptide (Lys-Gly) (interchain with G-Cter in SUMO2) linkage. A Phosphoserine modification is found at Ser482. Position 514 is a phosphothreonine (Thr514). Residues 536 to 567 (SEEAEIFQKKLDETTRLLRELQEAQNERLSTR) adopt a coiled-coil conformation. At Ser621 the chain carries Phosphoserine.

Interacts with TRIM24, PTPN13 and DVL1. Identified in a complex with SMARCA4/BRG1, SMARCC1/BAF155, SMARCE1/BAF57, DPF2/BAF45D and ARID2, subunits of the SWI/SNF-B (PBAF) chromatin remodeling complex. Interacts with IRF2 and HNRPUL1. Interacts (via N-terminus) with TP53. Interacts (via C-terminus) with EP300. Interacts with BRCA1. Interacts (via bromo domain) with histone H3 (via N-terminus) acetylated at 'Lys-14' (H3K14ac). Has low affinity for histone H3 acetylated at 'Lys-9' (H3K9ac). Has the highest affinity for histone H3 that is acetylated both at 'Lys-9' (H3K9ac) and at 'Lys-14' (H3K14ac). Has very low affinity for non-acetylated histone H3. Interacts (via bromo domain) with histone H4 (via N-terminus) acetylated at 'Lys-8' (H3K8ac) (in vitro).

Its subcellular location is the nucleus. The protein resides in the chromosome. Acts both as coactivator and as corepressor. May play a role in chromatin remodeling. Activator of the Wnt signaling pathway in a DVL1-dependent manner by negatively regulating the GSK3B phosphotransferase activity. Induces dephosphorylation of GSK3B at 'Tyr-216'. Down-regulates TRIM24-mediated activation of transcriptional activation by AR. Transcriptional corepressor that down-regulates the expression of target genes. Binds to target promoters, leading to increased histone H3 acetylation at 'Lys-9' (H3K9ac). Binds to the ESR1 promoter. Recruits BRCA1 and POU2F1 to the ESR1 promoter. Coactivator for TP53-mediated activation of transcription of a set of target genes. Required for TP53-mediated cell-cycle arrest in response to oncogene activation. Promotes acetylation of TP53 at 'Lys-382', and thereby promotes efficient recruitment of TP53 to target promoters. Inhibits cell cycle progression from G1 to S phase. The chain is Bromodomain-containing protein 7 (BRD7) from Pongo abelii (Sumatran orangutan).